An 859-amino-acid polypeptide reads, in one-letter code: DNA mismatch repair protein MutS (859 aa).

615 to 622 (GPNMGGKS) lines the ATP pocket.

This sequence belongs to the DNA mismatch repair MutS family.

This protein is involved in the repair of mismatches in DNA. It is possible that it carries out the mismatch recognition step. This protein has a weak ATPase activity. The chain is DNA mismatch repair protein MutS from Chromohalobacter salexigens (strain ATCC BAA-138 / DSM 3043 / CIP 106854 / NCIMB 13768 / 1H11).